The sequence spans 492 residues: Cysteine--tRNA ligase (492 aa).

Residue C29 coordinates Zn(2+). A 'HIGH' region motif is present at residues 31–41; it reads LTTSDPPHLGH. Zn(2+) contacts are provided by C229, H254, and E258. The 'KMSKS' region motif lies at 286-290; it reads KMSSS.

This sequence belongs to the class-I aminoacyl-tRNA synthetase family. Requires Zn(2+) as cofactor.

It localises to the cytoplasm. The enzyme catalyses tRNA(Cys) + L-cysteine + ATP = L-cysteinyl-tRNA(Cys) + AMP + diphosphate. This chain is Cysteine--tRNA ligase, found in Haloarcula marismortui (strain ATCC 43049 / DSM 3752 / JCM 8966 / VKM B-1809) (Halobacterium marismortui).